A 116-amino-acid polypeptide reads, in one-letter code: Protein Wnt-5b (116 aa).

Residue Ser-1 is the site of O-palmitoleoyl serine; by PORCN attachment. N-linked (GlcNAc...) asparagine glycans are attached at residues Asn-69 and Asn-83. Cysteines 82 and 97 form a disulfide.

This sequence belongs to the Wnt family. Post-translationally, palmitoleoylation is required for efficient binding to frizzled receptors. Depalmitoleoylation leads to Wnt signaling pathway inhibition.

The protein resides in the secreted. Its subcellular location is the extracellular space. The protein localises to the extracellular matrix. Ligand for members of the frizzled family of seven transmembrane receptors. Probable developmental protein. May be a signaling molecule which affects the development of discrete regions of tissues. Is likely to signal over only few cell diameters. This is Protein Wnt-5b (WNT-5B) from Alopias vulpinus (Common thresher shark).